Consider the following 228-residue polypeptide: Translation initiation factor 6 (228 aa).

Its function is as follows. Binds to the 50S ribosomal subunit and prevents its association with the 30S ribosomal subunit to form the 70S initiation complex. This is Translation initiation factor 6 from Methanocaldococcus jannaschii (strain ATCC 43067 / DSM 2661 / JAL-1 / JCM 10045 / NBRC 100440) (Methanococcus jannaschii).